The following is a 75-amino-acid chain: Protein Tlp homolog (75 aa).

The tract at residues Arg-53–Met-75 is disordered.

The protein belongs to the Tlp family.

In Clostridium botulinum (strain ATCC 19397 / Type A), this protein is Protein Tlp homolog.